A 420-amino-acid polypeptide reads, in one-letter code: Tyrosine--tRNA ligase (420 aa).

Tyr-33 is a binding site for L-tyrosine. The short motif at Pro-38–His-47 is the 'HIGH' region element. L-tyrosine-binding residues include Tyr-167 and Gln-171. The 'KMSKS' region signature appears at Lys-227–Ser-231. Residue Lys-230 participates in ATP binding. Positions Arg-352–Ile-418 constitute an S4 RNA-binding domain.

It belongs to the class-I aminoacyl-tRNA synthetase family. TyrS type 1 subfamily. As to quaternary structure, homodimer.

It is found in the cytoplasm. It catalyses the reaction tRNA(Tyr) + L-tyrosine + ATP = L-tyrosyl-tRNA(Tyr) + AMP + diphosphate + H(+). Catalyzes the attachment of tyrosine to tRNA(Tyr) in a two-step reaction: tyrosine is first activated by ATP to form Tyr-AMP and then transferred to the acceptor end of tRNA(Tyr). In Corynebacterium glutamicum (strain ATCC 13032 / DSM 20300 / JCM 1318 / BCRC 11384 / CCUG 27702 / LMG 3730 / NBRC 12168 / NCIMB 10025 / NRRL B-2784 / 534), this protein is Tyrosine--tRNA ligase.